The following is a 322-amino-acid chain: Transcription initiation factor IIB (322 aa).

2 tandem repeats follow at residues 125 to 213 (SLIN…VRDL) and 224 to 305 (NFVY…EIAQ).

It belongs to the TFIIB family.

Its function is as follows. Stabilizes TBP binding to an archaeal box-A promoter. Also responsible for recruiting RNA polymerase II to the pre-initiation complex (DNA-TBP-TFIIB). The protein is Transcription initiation factor IIB of Aeropyrum pernix (strain ATCC 700893 / DSM 11879 / JCM 9820 / NBRC 100138 / K1).